A 418-amino-acid polypeptide reads, in one-letter code: RuvB-like helicase 2 (418 aa).

65–72 provides a ligand contact to ATP; it reads GDRGSGKT.

It belongs to the RuvB family. In terms of assembly, component of the SWR1 chromatin remodeling complex, the INO80 chromatin remodeling complex, and of the R2TP complex.

The protein localises to the nucleus. It catalyses the reaction ATP + H2O = ADP + phosphate + H(+). DNA helicase which participates in several chromatin remodeling complexes, including the SWR1 and the INO80 complexes. The SWR1 complex mediates the ATP-dependent exchange of histone H2A for the H2A variant HZT1 leading to transcriptional regulation of selected genes by chromatin remodeling. The INO80 complex remodels chromatin by shifting nucleosomes and is involved in DNA repair. Also involved in pre-rRNA processing. The protein is RuvB-like helicase 2 (RVB2) of Encephalitozoon cuniculi (strain GB-M1) (Microsporidian parasite).